A 197-amino-acid chain; its full sequence is GTP cyclohydrolase-2 (197 aa).

50 to 54 (RIHSE) lines the GTP pocket. Zn(2+)-binding residues include Cys-55, Cys-66, and Cys-68. GTP is bound by residues Gln-71, 93 to 95 (EGR), and Thr-115. Asp-127 acts as the Proton acceptor in catalysis. Arg-129 serves as the catalytic Nucleophile. GTP is bound by residues Thr-150 and Lys-155.

It belongs to the GTP cyclohydrolase II family. Zn(2+) is required as a cofactor.

The catalysed reaction is GTP + 4 H2O = 2,5-diamino-6-hydroxy-4-(5-phosphoribosylamino)-pyrimidine + formate + 2 phosphate + 3 H(+). The protein operates within cofactor biosynthesis; riboflavin biosynthesis; 5-amino-6-(D-ribitylamino)uracil from GTP: step 1/4. Functionally, catalyzes the conversion of GTP to 2,5-diamino-6-ribosylamino-4(3H)-pyrimidinone 5'-phosphate (DARP), formate and pyrophosphate. This Aeromonas hydrophila subsp. hydrophila (strain ATCC 7966 / DSM 30187 / BCRC 13018 / CCUG 14551 / JCM 1027 / KCTC 2358 / NCIMB 9240 / NCTC 8049) protein is GTP cyclohydrolase-2.